Here is a 370-residue protein sequence, read N- to C-terminus: Glutamine synthetase (370 aa).

A GS beta-grasp domain is found at 23-102; sequence VLAEYVWIDA…VLTECWNNDG (80 aa). Positions 40–69 are disordered; that stretch reads CKTLDKKPSSVEDLPEWNFDGSSTGQAPGH. In terms of domain architecture, GS catalytic spans 109-370; sequence HRHESAKLMK…FKEYARESSD (262 aa).

It belongs to the glutamine synthetase family. Homooctamer.

The protein resides in the cytoplasm. It catalyses the reaction L-glutamate + NH4(+) + ATP = L-glutamine + ADP + phosphate + H(+). The sequence is that of Glutamine synthetase (GLN1) from Debaryomyces hansenii (strain ATCC 36239 / CBS 767 / BCRC 21394 / JCM 1990 / NBRC 0083 / IGC 2968) (Yeast).